The sequence spans 272 residues: Formamidopyrimidine-DNA glycosylase (272 aa).

Proline 2 acts as the Schiff-base intermediate with DNA in catalysis. Glutamate 3 (proton donor) is an active-site residue. Lysine 58 functions as the Proton donor; for beta-elimination activity in the catalytic mechanism. The DNA site is built by histidine 94, arginine 112, and arginine 153. The segment at 238–272 adopts an FPG-type zinc-finger fold; that stretch reads FVYDRAGEPCRVCGAPIRQIVQGQRSTYFCPNCQR. The active-site Proton donor; for delta-elimination activity is the arginine 262.

The protein belongs to the FPG family. In terms of assembly, monomer. Zn(2+) is required as a cofactor.

The catalysed reaction is Hydrolysis of DNA containing ring-opened 7-methylguanine residues, releasing 2,6-diamino-4-hydroxy-5-(N-methyl)formamidopyrimidine.. It carries out the reaction 2'-deoxyribonucleotide-(2'-deoxyribose 5'-phosphate)-2'-deoxyribonucleotide-DNA = a 3'-end 2'-deoxyribonucleotide-(2,3-dehydro-2,3-deoxyribose 5'-phosphate)-DNA + a 5'-end 5'-phospho-2'-deoxyribonucleoside-DNA + H(+). Its function is as follows. Involved in base excision repair of DNA damaged by oxidation or by mutagenic agents. Acts as a DNA glycosylase that recognizes and removes damaged bases. Has a preference for oxidized purines, such as 7,8-dihydro-8-oxoguanine (8-oxoG). Has AP (apurinic/apyrimidinic) lyase activity and introduces nicks in the DNA strand. Cleaves the DNA backbone by beta-delta elimination to generate a single-strand break at the site of the removed base with both 3'- and 5'-phosphates. This Burkholderia mallei (strain NCTC 10229) protein is Formamidopyrimidine-DNA glycosylase.